A 232-amino-acid chain; its full sequence is Ribonuclease 3 (232 aa).

One can recognise an RNase III domain in the interval 5-134 (QTVLKNHFAI…FLGALLLDKD (130 aa)). A Mg(2+)-binding site is contributed by Glu-47. The active site involves Asp-51. The Mg(2+) site is built by Asp-120 and Glu-123. Residue Glu-123 is part of the active site. Residues 160–229 (DYKTHLQELL…AKNAVEKGLD (70 aa)) form the DRBM domain.

This sequence belongs to the ribonuclease III family. In terms of assembly, homodimer. The cofactor is Mg(2+).

It is found in the cytoplasm. The enzyme catalyses Endonucleolytic cleavage to 5'-phosphomonoester.. Functionally, digests double-stranded RNA. Involved in the processing of primary rRNA transcript to yield the immediate precursors to the large and small rRNAs (23S and 16S). Processes some mRNAs, and tRNAs when they are encoded in the rRNA operon. Processes pre-crRNA and tracrRNA of type II CRISPR loci if present in the organism. In Streptococcus pneumoniae (strain Taiwan19F-14), this protein is Ribonuclease 3.